A 193-amino-acid chain; its full sequence is Ribosome hibernation promotion factor (193 aa).

It belongs to the HPF/YfiA ribosome-associated protein family. Long HPF subfamily. Interacts with 100S ribosomes.

The protein resides in the cytoplasm. Its function is as follows. Might modulate either transcription and/or translation. Required for dimerization of active 70S ribosomes into 100S ribosomes in stationary phase; 100S ribosomes are translationally inactive and sometimes present during exponential growth. This Picosynechococcus sp. (strain ATCC 27264 / PCC 7002 / PR-6) (Agmenellum quadruplicatum) protein is Ribosome hibernation promotion factor.